Reading from the N-terminus, the 387-residue chain is 3-ketoacyl-CoA thiolase (387 aa).

Catalysis depends on cysteine 91, which acts as the Acyl-thioester intermediate. Catalysis depends on proton acceptor residues histidine 343 and cysteine 373.

Belongs to the thiolase-like superfamily. Thiolase family. As to quaternary structure, heterotetramer of two alpha chains (FadB) and two beta chains (FadA).

It is found in the cytoplasm. It carries out the reaction an acyl-CoA + acetyl-CoA = a 3-oxoacyl-CoA + CoA. It participates in lipid metabolism; fatty acid beta-oxidation. Functionally, catalyzes the final step of fatty acid oxidation in which acetyl-CoA is released and the CoA ester of a fatty acid two carbons shorter is formed. The sequence is that of 3-ketoacyl-CoA thiolase from Shigella dysenteriae serotype 1 (strain Sd197).